The following is a 248-amino-acid chain: Triosephosphate isomerase (248 aa).

9 to 11 (NWK) serves as a coordination point for substrate. Catalysis depends on H94, which acts as the Electrophile. The Proton acceptor role is filled by E164. Substrate contacts are provided by residues G170, S209, and 230 to 231 (GG).

Belongs to the triosephosphate isomerase family. In terms of assembly, homodimer.

It is found in the cytoplasm. The enzyme catalyses D-glyceraldehyde 3-phosphate = dihydroxyacetone phosphate. The protein operates within carbohydrate biosynthesis; gluconeogenesis. It functions in the pathway carbohydrate degradation; glycolysis; D-glyceraldehyde 3-phosphate from glycerone phosphate: step 1/1. Functionally, involved in the gluconeogenesis. Catalyzes stereospecifically the conversion of dihydroxyacetone phosphate (DHAP) to D-glyceraldehyde-3-phosphate (G3P). The chain is Triosephosphate isomerase from Hahella chejuensis (strain KCTC 2396).